Here is a 91-residue protein sequence, read N- to C-terminus: Large ribosomal subunit protein eL43 (91 aa).

The C4-type zinc-finger motif lies at 39–60; the sequence is CSFCGKDAVRRSSVGIWKCNGC.

This sequence belongs to the eukaryotic ribosomal protein eL43 family.

This chain is Large ribosomal subunit protein eL43 (rpl37A), found in Dictyostelium discoideum (Social amoeba).